The chain runs to 379 residues: Protein psi1 (379 aa).

Positions 1 to 70 (MVADTKLYDC…RKLYDQYGIT (70 aa)) constitute a J domain. Disordered regions lie at residues 69 to 95 (ITEGNAAPPPPGAEGGPGAGFGGFPGA) and 176 to 205 (FGGGGAGPHARRSHPSFGGSRPSQPPAQNE). The segment covering 81 to 95 (AEGGPGAGFGGFPGA) has biased composition (gly residues).

Its function is as follows. Required for nuclear migration during mitosis. It is required for the normal initiation of translation. In Schizosaccharomyces pombe (strain 972 / ATCC 24843) (Fission yeast), this protein is Protein psi1 (psi1).